Reading from the N-terminus, the 276-residue chain is Glutamate 5-kinase (276 aa).

Lys14 is an ATP binding site. Residues Ser54, Asp141, and Asn157 each contribute to the substrate site. Residues 177 to 178 (SD) and 219 to 225 (TGGMLTK) contribute to the ATP site.

The protein belongs to the glutamate 5-kinase family.

The protein resides in the cytoplasm. It carries out the reaction L-glutamate + ATP = L-glutamyl 5-phosphate + ADP. It participates in amino-acid biosynthesis; L-proline biosynthesis; L-glutamate 5-semialdehyde from L-glutamate: step 1/2. In terms of biological role, catalyzes the transfer of a phosphate group to glutamate to form L-glutamate 5-phosphate. In Listeria monocytogenes serovar 1/2a (strain ATCC BAA-679 / EGD-e), this protein is Glutamate 5-kinase.